A 537-amino-acid polypeptide reads, in one-letter code: Light-independent protochlorophyllide reductase subunit B (537 aa).

Asp36 is a binding site for [4Fe-4S] cluster. Asp292 acts as the Proton donor in catalysis. 428-429 (GL) serves as a coordination point for substrate. Positions 459–483 (TAGETAGQATEAATAPATPGAPLTG) are disordered.

It belongs to the ChlB/BchB/BchZ family. In terms of assembly, protochlorophyllide reductase is composed of three subunits; BchL, BchN and BchB. Forms a heterotetramer of two BchB and two BchN subunits. The cofactor is [4Fe-4S] cluster.

It carries out the reaction chlorophyllide a + oxidized 2[4Fe-4S]-[ferredoxin] + 2 ADP + 2 phosphate = protochlorophyllide a + reduced 2[4Fe-4S]-[ferredoxin] + 2 ATP + 2 H2O. It functions in the pathway porphyrin-containing compound metabolism; bacteriochlorophyll biosynthesis (light-independent). Its function is as follows. Component of the dark-operative protochlorophyllide reductase (DPOR) that uses Mg-ATP and reduced ferredoxin to reduce ring D of protochlorophyllide (Pchlide) to form chlorophyllide a (Chlide). This reaction is light-independent. The NB-protein (BchN-BchB) is the catalytic component of the complex. This Chloroherpeton thalassium (strain ATCC 35110 / GB-78) protein is Light-independent protochlorophyllide reductase subunit B.